The primary structure comprises 86 residues: Small nuclear ribonucleoprotein F (86 aa).

Position 2 is an N-acetylserine (Ser2). One can recognise a Sm domain in the interval 6-78 (NPKPFLNGLT…VLYIRGVEEE (73 aa)).

It belongs to the snRNP Sm proteins family. SmF/LSm6 subfamily. As to quaternary structure, core component of the spliceosomal U1, U2, U4 and U5 small nuclear ribonucleoproteins (snRNPs), the building blocks of the spliceosome. Most spliceosomal snRNPs contain a common set of Sm proteins, SNRPB, SNRPD1, SNRPD2, SNRPD3, SNRPE, SNRPF and SNRPG that assemble in a heptameric protein ring on the Sm site of the small nuclear RNA to form the core snRNP. Component of the U1 snRNP. The U1 snRNP is composed of the U1 snRNA and the 7 core Sm proteins SNRPB, SNRPD1, SNRPD2, SNRPD3, SNRPE, SNRPF and SNRPG, and at least three U1 snRNP-specific proteins SNRNP70/U1-70K, SNRPA/U1-A and SNRPC/U1-C. Component of the U4/U6-U5 tri-snRNP complex composed of the U4, U6 and U5 snRNAs and at least PRPF3, PRPF4, PRPF6, PRPF8, PRPF31, SNRNP200, TXNL4A, SNRNP40, SNRPB, SNRPD1, SNRPD2, SNRPD3, SNRPE, SNRPF, SNRPG, DDX23, CD2BP2, PPIH, SNU13, EFTUD2, SART1 and USP39, plus LSM2, LSM3, LSM4, LSM5, LSM6, LSM7 and LSM8. Component of the U7 snRNP complex, or U7 Sm protein core complex, that is composed of the U7 snRNA and at least LSM10, LSM11, SNRPB, SNRPD3, SNRPE, SNRPF and SNRPG; the complex does not contain SNRPD1 and SNRPD2. Component of the minor spliceosome, which splices U12-type introns. Part of the SMN-Sm complex that contains SMN1, GEMIN2/SIP1, DDX20/GEMIN3, GEMIN4, GEMIN5, GEMIN6, GEMIN7, GEMIN8, STRAP/UNRIP and the Sm proteins SNRPB, SNRPD1, SNRPD2, SNRPD3, SNRPE, SNRPF and SNRPG; catalyzes core snRNPs assembly. Forms a 6S pICln-Sm complex composed of CLNS1A/pICln, SNRPD1, SNRPD2, SNRPE, SNRPF and SNRPG; ring-like structure where CLNS1A/pICln mimics additional Sm proteins and which is unable to assemble into the core snRNP. Interacts with GEMIN2 (via N-terminus); the interaction is direct. Interacts with SNRPD2; the interaction is direct. Interacts with SNRPE; the interaction is direct.

It localises to the cytoplasm. The protein localises to the cytosol. Its subcellular location is the nucleus. Plays a role in pre-mRNA splicing as a core component of the spliceosomal U1, U2, U4 and U5 small nuclear ribonucleoproteins (snRNPs), the building blocks of the spliceosome. Component of both the pre-catalytic spliceosome B complex and activated spliceosome C complexes. As a component of the minor spliceosome, involved in the splicing of U12-type introns in pre-mRNAs. As part of the U7 snRNP it is involved in histone 3'-end processing. This Homo sapiens (Human) protein is Small nuclear ribonucleoprotein F (SNRPF).